The sequence spans 134 residues: ATP synthase epsilon chain (134 aa).

The protein belongs to the ATPase epsilon chain family. As to quaternary structure, F-type ATPases have 2 components, CF(1) - the catalytic core - and CF(0) - the membrane proton channel. CF(1) has five subunits: alpha(3), beta(3), gamma(1), delta(1), epsilon(1). CF(0) has three main subunits: a, b and c.

The protein resides in the cell membrane. Produces ATP from ADP in the presence of a proton gradient across the membrane. The polypeptide is ATP synthase epsilon chain (Clostridium botulinum (strain Alaska E43 / Type E3)).